Consider the following 47-residue polypeptide: Large ribosomal subunit protein bL34 (47 aa).

The tract at residues 1–47 (MVTEGLKPHISIKKKKRKSGFLARMRTKSGRKIIARRRRKGRKRLAP) is disordered. Positions 10 to 47 (ISIKKKKRKSGFLARMRTKSGRKIIARRRRKGRKRLAP) are enriched in basic residues.

Belongs to the bacterial ribosomal protein bL34 family.

This chain is Large ribosomal subunit protein bL34 (rpmH), found in Aquifex aeolicus (strain VF5).